The chain runs to 1045 residues: DNA polymerase (1045 aa).

Residues 331–355 are disordered; that stretch reads IKENEESDSESDNDDEEDKKENDGA. Residues 335 to 348 show a composition bias toward acidic residues; the sequence is EESDSESDNDDEED.

This sequence belongs to the DNA polymerase type-B family.

The catalysed reaction is DNA(n) + a 2'-deoxyribonucleoside 5'-triphosphate = DNA(n+1) + diphosphate. The protein is DNA polymerase (dpo) of Phaeocystis pouchetii (PpV01).